We begin with the raw amino-acid sequence, 3841 residues long: Transformation/transcription domain-associated protein (3841 aa).

Disordered stretches follow at residues 491-516 and 2002-2027; these read TPTVTTPALPPPAPPTPVTPAPPPAT and QQPESEADPGSVGEGTSGASAAMKRG. Residues 498–515 show a composition bias toward pro residues; sequence ALPPPAPPTPVTPAPPPA. Residues 2025 to 2040 carry the Bipartite nuclear localization signal motif; it reads KRGMSVDSAQDVKRFR. Residues 2671–3239 enclose the FAT domain; that stretch reads VLKYLGKTHN…YFPIRTLYLT (569 aa). The segment at 3249 to 3271 is disordered; sequence KSDSGQQQPSSAAAQTHSASDPG. Residues 3251-3268 show a composition bias toward low complexity; it reads DSGQQQPSSAAAQTHSAS. A PI3K/PI4K catalytic domain is found at 3482-3805; that stretch reads MPRVEIVQKH…AVTAIMTRLH (324 aa). A G-loop region spans residues 3488–3494; the sequence is VQKHNTA. The interval 3669–3677 is catalytic loop; the sequence is HLNRLNPEM. The interval 3689 to 3714 is activation loop; the sequence is VSYFRFDINDATGDLDANRPVPFRLT. The 33-residue stretch at 3809–3841 folds into the FATC domain; it reads QFEGGESKVNTLVAAANSLDNLCRMDPAWHPWL.

Belongs to the PI3/PI4-kinase family. TRA1 subfamily.

The protein resides in the nucleus. In terms of biological role, adapter protein, which is found in various multiprotein chromatin complexes with histone acetyltransferase activity (HAT), which gives a specific tag for epigenetic transcription activation. May be required for the mitotic checkpoint and normal cell cycle progression. May play a role in the formation and maintenance of the auditory system. The polypeptide is Transformation/transcription domain-associated protein (Danio rerio (Zebrafish)).